We begin with the raw amino-acid sequence, 79 residues long: Alpha-actitoxin-Ms11a-4 (79 aa).

A signal peptide spans 1–23 (MKVLVAVLVFALLMCMFVDIAES). The propeptide occupies 24-46 (RRRDNPEYPSGLRYDEEMGVFKR). Cystine bridges form between C47-C61, C54-C67, and C60-C76. Residue Y78 is modified to Tyrosine amide.

It is found in the secreted. It localises to the nematocyst. Functionally, alpha-toxins act on postsynaptic membranes, they bind to the nicotinic acetylcholine receptors (nAChR) and thus inhibit them. This toxin very weakly competes with alpha-bungarotoxin for binding to orthosteric sites on muscle-type T.carlifornicus (IC(50)=14.95 uM) and human alpha-7/CHRNA7 nAChRs (IC(50)&gt;45 uM). The protein is Alpha-actitoxin-Ms11a-4 of Metridium senile (Brown sea anemone).